The chain runs to 223 residues: FAD-dependent monooxygenase imqC (223 aa).

Residues 139-141 (RFY), tyrosine 189, and aspartate 210 each bind FAD.

Belongs to the PheA/TfdB FAD monooxygenase family.

Its pathway is secondary metabolite biosynthesis. Functionally, FAD-dependent monooxygenase; part of the gene cluster that mediates the biosynthesis of imizoquins A to D, tripeptide-derived alkaloids that serve a protective role against oxidative stress that are essential for normal germination. ImqB is a canonical three-module NRPS that assembles the tripeptide backbone of the imizoquins via condensation of Trp, Tyr, and Leu-derived precursors. N-methylation by imqF and phenol oxidation by imqC, followed by cyclization via the FAD-dependent oxidase imqH carry out the three-step transformation of L-tyrosine into tetrahydroisoquinoline. Importantly, this sequence requires the presence of a free amine in the tyrosine moiety, indicating that isoquinoline formation occurs prior to peptide bond formation. The imidazolidin-4-one ring of imizoquins could form following additional oxidation of the methyl-derived bridgehead carbon by imqH. Lastly, O-methylation by imqG and leucine hydroxylation by imqE complete biosynthesis of the imizoquins. This Aspergillus flavus (strain ATCC 200026 / FGSC A1120 / IAM 13836 / NRRL 3357 / JCM 12722 / SRRC 167) protein is FAD-dependent monooxygenase imqC.